A 143-amino-acid chain; its full sequence is Hemoglobin subunit alpha (143 aa).

In terms of domain architecture, Globin spans threonine 2–arginine 143. Histidine 60 serves as a coordination point for O2. Histidine 89 is a binding site for heme b.

It belongs to the globin family. Heterotetramer of two alpha chains and two beta chains. Red blood cells.

In terms of biological role, involved in oxygen transport from gills to the various peripheral tissues. This chain is Hemoglobin subunit alpha (hba), found in Thunnus thynnus (Atlantic bluefin tuna).